A 376-amino-acid chain; its full sequence is MTSDVLQLTCDLIARASVTPADAGCQALIADRLSAAGFACEHLRLGAVDNLWATHGSGAPVLVLLGHTDVVPPGPASDWASDPFAPQVRDGVLYGRGAADMKGSVAAFVVAAEQFVAAHPEHPGTLAVLLTSDEEGDAIDGVRHVARLFAERGQQIDWCITGEPSSTERLGDLLRVGRRGSLSGNLIVKGVQGHVAYPHKARNPIHLAAPALAELIARQWDDGFESFPPTSLQISNIHAGTGANNVIPGELQVAFNLRYTPHWNAETLEREIVALLERHALTYTLAWHRSGEPFYTPEGTLRRVAREVLGAFVGAPPEESTGGGTSDARFIAPLGAQCIEVGPVNASIHQVDEHVRVADLEALPALYRTLVERLLV.

A Zn(2+)-binding site is contributed by histidine 67. Aspartate 69 is a catalytic residue. Aspartate 100 is a binding site for Zn(2+). The active-site Proton acceptor is the glutamate 134. Positions 135, 163, and 349 each coordinate Zn(2+).

Belongs to the peptidase M20A family. DapE subfamily. Homodimer. It depends on Zn(2+) as a cofactor. The cofactor is Co(2+).

The catalysed reaction is N-succinyl-(2S,6S)-2,6-diaminopimelate + H2O = (2S,6S)-2,6-diaminopimelate + succinate. It functions in the pathway amino-acid biosynthesis; L-lysine biosynthesis via DAP pathway; LL-2,6-diaminopimelate from (S)-tetrahydrodipicolinate (succinylase route): step 3/3. Catalyzes the hydrolysis of N-succinyl-L,L-diaminopimelic acid (SDAP), forming succinate and LL-2,6-diaminopimelate (DAP), an intermediate involved in the bacterial biosynthesis of lysine and meso-diaminopimelic acid, an essential component of bacterial cell walls. This chain is Succinyl-diaminopimelate desuccinylase, found in Xanthomonas campestris pv. campestris (strain 8004).